We begin with the raw amino-acid sequence, 123 residues long: Polyadenylate-binding protein-interacting protein 2B (123 aa).

Met1 is subject to N-acetylmethionine. A compositionally biased stretch (polar residues) spans Met1 to Val13. Disordered regions lie at residues Met1–Pro30 and Asn91–Tyr123. 2 stretches are compositionally biased toward basic and acidic residues: residues Lys14–Pro30 and Asp113–Tyr123.

Belongs to the PAIP2 family. As to quaternary structure, interacts (via central acidic portion and C-terminus) with PABPC1 (via the second and third RRM domains and the C-terminus). Ubiquitinated in vitro. Expressed in brain, cervix, heart, liver, ovary, kidney, prostate and testis.

Its function is as follows. Inhibits translation of capped and polyadenylated mRNAs by displacing PABPC1 from the poly(A) tail. This Homo sapiens (Human) protein is Polyadenylate-binding protein-interacting protein 2B (PAIP2B).